Here is a 390-residue protein sequence, read N- to C-terminus: Lipid-A-disaccharide synthase (390 aa).

The protein belongs to the LpxB family.

The enzyme catalyses a lipid X + a UDP-2-N,3-O-bis[(3R)-3-hydroxyacyl]-alpha-D-glucosamine = a lipid A disaccharide + UDP + H(+). It functions in the pathway bacterial outer membrane biogenesis; LPS lipid A biosynthesis. Condensation of UDP-2,3-diacylglucosamine and 2,3-diacylglucosamine-1-phosphate to form lipid A disaccharide, a precursor of lipid A, a phosphorylated glycolipid that anchors the lipopolysaccharide to the outer membrane of the cell. In Haemophilus influenzae (strain PittGG), this protein is Lipid-A-disaccharide synthase.